Consider the following 176-residue polypeptide: ATP-dependent protease subunit HslV (176 aa).

The active site involves Thr-2. Positions 157, 160, and 163 each coordinate Na(+).

This sequence belongs to the peptidase T1B family. HslV subfamily. A double ring-shaped homohexamer of HslV is capped on each side by a ring-shaped HslU homohexamer. The assembly of the HslU/HslV complex is dependent on binding of ATP.

The protein localises to the cytoplasm. The catalysed reaction is ATP-dependent cleavage of peptide bonds with broad specificity.. Allosterically activated by HslU binding. In terms of biological role, protease subunit of a proteasome-like degradation complex believed to be a general protein degrading machinery. The chain is ATP-dependent protease subunit HslV from Photorhabdus laumondii subsp. laumondii (strain DSM 15139 / CIP 105565 / TT01) (Photorhabdus luminescens subsp. laumondii).